The primary structure comprises 517 residues: FAD-dependent monooxygenase dmxR9 (517 aa).

Valine 96 and arginine 162 together coordinate FAD. Residues arginine 243 and tyrosine 270 contribute to the active site. Positions 365 and 378 each coordinate FAD.

Belongs to the paxM FAD-dependent monooxygenase family. It depends on FAD as a cofactor.

It participates in secondary metabolite biosynthesis. FAD-dependent monooxygenase; part of the gene cluster that mediates the biosynthesis of the dimeric xanthones cryptosporioptides. The pathway begins with the synthesis of atrochrysone thioester by the polyketide synthase dmx-nrPKS. The atrochrysone carboxyl ACP thioesterase dmxR1 then breaks the thioester bond and releases the atrochrysone carboxylic acid from dmx-nrPKS. Atrochrysone carboxylic acid is decarboxylated by the decarboxylase dmxR15, and oxidized by the anthrone oxygenase dmxR16 to yield emodin. Emodin is then reduced to emodin hydroquinone by the oxidoreductase dmxR7. A-ring reduction by the short chain dehydrogenase dmxR18, dehydration by the scytalone dehydratase-like protein dmxR17 and probable spontaneous re-oxidation, results in overall deoxygenation to chrysophanol. Baeyer-Villiger oxidation by the Baeyer-Villiger monooxygenase (BVMO) dmxR6 then yields monodictylactone in equilibrium with monodictyphenone. In the case of the cryptosporioptides biosynthesis, monodictylactone is reduced at C-12 to an alcohol (by the short chain dehydrogenases dmxR12 or dmxR8) and hydroxylated at C-5 by dmxR9, yielding the electron-rich aromatic which could eliminate H(2)O to form the ortho-quinonemethide, followed by tautomerisation to paraquinone and complete the formal reduction to produce the 10-methylgroup. Conjugate addition of C-4a-OH to the resulting paraquinone by the monooxygenase dmxR10 then gives cyclohexadienone, which is then reduced at C-5 by the short chain dehydrogenase dmxR3 to give the dihydroxanthone. The 6,7-epoxide in the cryptosporioptides could be introduced by the cytochrome P450 monooxygenase dmxL3. The highly reducing PKS dmxL2 manufactures butyrate, which is further carboxylated by dmxL1 to form ethylmalonate. It is not yet clear whether the carboxylation occurs while the butyrate is attached to the ACP of dmxL2, but this unusual fungal metabolite could then be esterified to O-5 by the O-acetyltransferase dmxR13. Finally, dimerization performed by dmxR5 gives the observed dimers cryptosporioptides A, B and C as the final products of the pathway. In Cryptosporiopsis sp. (strain 8999), this protein is FAD-dependent monooxygenase dmxR9.